The primary structure comprises 83 residues: Disintegrin isoform D-2 (83 aa).

The region spanning 2–83 (PPVCGNELLE…GKSSDCPWNH (82 aa)) is the Disintegrin domain. Disulfide bonds link Cys-5–Cys-24, Cys-16–Cys-34, Cys-18–Cys-29, Cys-28–Cys-51, Cys-42–Cys-48, Cys-47–Cys-72, and Cys-60–Cys-79. The Cell attachment site signature appears at 64–66 (RGD).

Belongs to the venom metalloproteinase (M12B) family. P-II subfamily. P-IIa sub-subfamily. As to quaternary structure, monomer (disintegrin). In terms of tissue distribution, expressed by the venom gland.

It is found in the secreted. In terms of biological role, inhibits fibrinogen interaction with platelets. Acts by binding to the alpha-IIb/beta-3 (ITGA2B/ITGB3) on the platelet surface and inhibits aggregation induced by ADP, thrombin, platelet-activating factor and collagen. The chain is Disintegrin isoform D-2 from Bitis arietans (African puff adder).